Consider the following 703-residue polypeptide: Antigen peptide transporter 2 (703 aa).

Residues 1 to 6 (MALSHP) are Lumenal-facing. The chain crosses the membrane as a helical span at residues 7 to 27 (RPWASLLLVDLALLGLLQSSL). The Cytoplasmic segment spans residues 28 to 56 (GTLLPPGLPGLWLEGTLRLGVLWGLLKVG). Residues 57–77 (GLLRLVGTFLPLLCLTNPLFF) traverse the membrane as a helical segment. The Lumenal portion of the chain corresponds to 78–98 (SLRALVGSTMSTSVVRVASAS). The helical transmembrane segment at 99–119 (WGWLLADYGAVALSLAVWAVL) threads the bilayer. The Cytoplasmic portion of the chain corresponds to 120 to 148 (SPAGAQEKEPGQENNRALMIRLLRLSKPD). Residues 149-169 (LPFLIVAFIFLAMAVWWEMFI) form a helical membrane-spanning segment. Positions 152-435 (LIVAFIFLAM…LVYMYGDMLS (284 aa)) constitute an ABC transmembrane type-1 domain. Over 170 to 187 (PHYSGRVIDILGGDFDPD) the chain is Lumenal. A helical membrane pass occupies residues 188 to 208 (AFASAIFFMCLFSVGSSLSAG). Over 209–266 (CRGGSFLFAESRINLRIREQLFSSLLRQDLAFFQETKTGELNSRLSSDTSLMSQWLSL) the chain is Cytoplasmic. The chain crosses the membrane as a helical span at residues 267–287 (NANILLRSLVKVVGLYYFMLQ). Topologically, residues 288 to 293 (VSPRLT) are lumenal. Residues 294-314 (FLSLLDLPLTIAAEKVYNPRH) form a helical membrane-spanning segment. The segment at 301–389 (PLTIAAEKVY…QRVMALGMQV (89 aa)) is part of the peptide-binding site. Residues 315 to 374 (QAVLKEIQDAVAKAGQVVREAVGGLQTVRSFGAEEQEVRRYKEALERCRQLWWRRDLEKS) are Cytoplasmic-facing. The helical transmembrane segment at 375–395 (LYLVIQRVMALGMQVLILNVG) threads the bilayer. The Lumenal segment spans residues 396–408 (VQQILAGEVTRGG). A helical transmembrane segment spans residues 409-429 (LLSFLLYQEEVGHHVQNLVYM). The tract at residues 414–433 (LYQEEVGHHVQNLVYMYGDM) is part of the peptide-binding site. Topologically, residues 430-703 (YGDMLSNVGA…AHLVQQRLEA (274 aa)) are cytoplasmic. One can recognise an ABC transporter domain in the interval 468–702 (VEFQDVSFSY…YAHLVQQRLE (235 aa)). 503–510 (GPNGSGKS) lines the ATP pocket.

The protein belongs to the ABC transporter superfamily. ABCB family. MHC peptide exporter (TC 3.A.1.209) subfamily. In terms of assembly, heterodimer of TAP1 and TAP2 (TAP1-TAP2). A component of the peptide loading complex (PLC), interacts via TAPBP with MHCI heterodimer; this interaction mediates peptide-MHCI assembly. Mg(2+) is required as a cofactor.

It is found in the endoplasmic reticulum membrane. It catalyses the reaction a peptide antigen(in) + ATP + H2O = a peptide antigen(out) + ADP + phosphate + H(+). Its function is as follows. ABC transporter associated with antigen processing. In complex with TAP1 mediates unidirectional translocation of peptide antigens from cytosol to endoplasmic reticulum (ER) for loading onto MHC class I (MHCI) molecules. Uses the chemical energy of ATP to export peptides against the concentration gradient. During the transport cycle alternates between 'inward-facing' state with peptide binding site facing the cytosol to 'outward-facing' state with peptide binding site facing the ER lumen. Peptide antigen binding to ATP-loaded TAP1-TAP2 induces a switch to hydrolysis-competent 'outward-facing' conformation ready for peptide loading onto nascent MHCI molecules. Subsequently ATP hydrolysis resets the transporter to the 'inward facing' state for a new cycle. As a component of the peptide loading complex (PLC), acts as a molecular scaffold essential for peptide-MHCI assembly and antigen presentation. The protein is Antigen peptide transporter 2 (Tap2) of Rattus norvegicus (Rat).